Reading from the N-terminus, the 329-residue chain is GTPase Obg (329 aa).

Residues 2 to 160 enclose the Obg domain; sequence YNFKDSVSIT…LNVRLELFLV (159 aa). One can recognise an OBG-type G domain in the interval 161-327; it reads ADIGLVGPPN…LIKEFFILAK (167 aa). GTP-binding positions include 167–174, 192–196, 213–216, 280–283, and 308–310; these read GPPNAGKS, FTTKI, DIPG, NKLD, and SIY. Positions 174 and 194 each coordinate Mg(2+).

It belongs to the TRAFAC class OBG-HflX-like GTPase superfamily. OBG GTPase family. Monomer. It depends on Mg(2+) as a cofactor.

Its subcellular location is the cytoplasm. Functionally, an essential GTPase which binds GTP, GDP and possibly (p)ppGpp with moderate affinity, with high nucleotide exchange rates and a fairly low GTP hydrolysis rate. Plays a role in control of the cell cycle, stress response, ribosome biogenesis and in those bacteria that undergo differentiation, in morphogenesis control. In Borrelia garinii subsp. bavariensis (strain ATCC BAA-2496 / DSM 23469 / PBi) (Borreliella bavariensis), this protein is GTPase Obg.